Reading from the N-terminus, the 296-residue chain is Malonyl-[acyl-carrier protein] O-methyltransferase (296 aa).

Belongs to the methyltransferase superfamily.

It catalyses the reaction malonyl-[ACP] + S-adenosyl-L-methionine = malonyl-[ACP] methyl ester + S-adenosyl-L-homocysteine. It participates in cofactor biosynthesis; biotin biosynthesis. Converts the free carboxyl group of a malonyl-thioester to its methyl ester by transfer of a methyl group from S-adenosyl-L-methionine (SAM). It allows to synthesize pimeloyl-ACP via the fatty acid synthetic pathway. The polypeptide is Malonyl-[acyl-carrier protein] O-methyltransferase (Methylovorus sp. (strain MP688)).